Reading from the N-terminus, the 144-residue chain is Putative protein PHLOEM PROTEIN 2-LIKE B4 (144 aa).

This chain is Putative protein PHLOEM PROTEIN 2-LIKE B4 (PP2B4), found in Arabidopsis thaliana (Mouse-ear cress).